The primary structure comprises 247 residues: Neurotrophic factor BDNF precursor form (247 aa).

An N-terminal signal peptide occupies residues 1-18 (MTILFLTMVISYFGCMKA). The propeptide occupies 19-128 (APMKEANIRG…AANMSMRVRR (110 aa)). Asn-121 carries an N-linked (GlcNAc...) asparagine glycan. 3 disulfides stabilise this stretch: Cys-141–Cys-208, Cys-186–Cys-237, and Cys-196–Cys-239.

It belongs to the NGF-beta family. In terms of assembly, monomers and homodimers. Binds to NTRK2/TRKB. Can form heterodimers with other neurotrophin family members, such as NTF3 and NTF4 (in vitro), but the physiological relevance of this is not clear. BDNF precursor form: interacts with the heterodimer formed by NGFR and SORCS2. Post-translationally, N-glycosylated and glycosulfated, contrary to mature BDNF. In terms of processing, mature BDNF is produced by proteolytic removal of the propeptide, catalyzed by a FURIN family member. In addition, the precursor form is proteolytically cleaved within the propeptide, but this is not an obligatory intermediate for the production of mature BDNF. Can be converted into mature BDNF by plasmin (PLG). Detected in blood plasma and in saliva (at protein level). Brain. Highly expressed in hippocampus, amygdala, cerebral cortex and cerebellum. Also expressed in heart, lung, skeletal muscle, testis, prostate and placenta.

Its subcellular location is the secreted. In terms of biological role, important signaling molecule that activates signaling cascades downstream of NTRK2. During development, promotes the survival and differentiation of selected neuronal populations of the peripheral and central nervous systems. Participates in axonal growth, pathfinding and in the modulation of dendritic growth and morphology. Major regulator of synaptic transmission and plasticity at adult synapses in many regions of the CNS. The versatility of BDNF is emphasized by its contribution to a range of adaptive neuronal responses including long-term potentiation (LTP), long-term depression (LTD), certain forms of short-term synaptic plasticity, as well as homeostatic regulation of intrinsic neuronal excitability. Important signaling molecule that activates signaling cascades downstream of NTRK2. Activates signaling cascades via the heterodimeric receptor formed by NGFR and SORCS2. Signaling via NGFR and SORCS2 plays a role in synaptic plasticity and long-term depression (LTD). Binding to NGFR and SORCS2 promotes neuronal apoptosis. Promotes neuronal growth cone collapse. This chain is Neurotrophic factor BDNF precursor form, found in Homo sapiens (Human).